We begin with the raw amino-acid sequence, 1673 residues long: Leucine-rich repeat- and IQ domain-containing protein 1 (1673 aa).

Disordered regions lie at residues 22-48 and 189-208; these read ISIS…SDTD and LEEK…KRTF. Residues 34–59 form an LRR 1 repeat; that stretch reads NDSVSDTQSDSSDTDLLELPESVLHY. One copy of the LRR 2 repeat lies at 216–239; sequence QCWMRQFEVEKKHLEDLQKQDQDK. One can recognise an IQ 1 domain in the interval 291–320; sequence RYDAAVKIQATYRASVTYRKYSPIIKEQME. The interval 324 to 374 is disordered; it reads RRAQELKEKEAKIRQKEEEKRRRLEEEQRVEEEKKKKMLEERRRREREYEE. Residues 326–374 show a composition bias toward basic and acidic residues; the sequence is AQELKEKEAKIRQKEEEKRRRLEEEQRVEEEKKKKMLEERRRREREYEE. The LRR 3 repeat unit spans residues 491 to 516; the sequence is LPKLKINENLSKNQCSEQPSDQEFNA. Disordered regions lie at residues 544–658 and 679–702; these read ESDT…EEIP and EGEA…GSHS. 2 stretches are compositionally biased toward basic and acidic residues: residues 549–567 and 588–602; these read TEEH…ETEK and EETR…EIKE. The span at 603 to 629 shows a compositional bias: polar residues; it reads MTQQGGPSDENNSSPISMQKSLPSLTP. The stretch at 641 to 665 is one LRR 4 repeat; that stretch reads LEEDQETDLKSERIEEIPEEGVLSC. The segment covering 647–656 has biased composition (basic and acidic residues); the sequence is TDLKSERIEE. 11 LRR repeats span residues 830–852, 853–873, 874–894, 895–919, 921–939, 940–961, 962–983, 984–1005, 1007–1029, 1030–1054, and 1067–1090; these read CSNL…LSHC, TRLK…CENL, ENLS…GFDG, CTNL…SLKY, QELT…LCEA, PTIV…IGNC, GLLQ…LRNH, VLLR…LSSC, LPLL…LFHL, VSLE…WFNA, and PVLQ…VLNG. Disordered stretches follow at residues 1163–1230 and 1308–1330; these read AHEQ…HCEE and PTTT…EERR. 2 stretches are compositionally biased toward polar residues: residues 1168-1226 and 1308-1325; these read DVNT…PSTS and PTTT…QTTS. IQ domains lie at 1280-1309 and 1340-1369; these read PTKA…MHPT and REKA…AIKD. The LRR 16 repeat unit spans residues 1378 to 1405; it reads EIDLEDFEFDEDALEKDWPALDSTGFPS.

This chain is Leucine-rich repeat- and IQ domain-containing protein 1 (Lrriq1), found in Mus musculus (Mouse).